The chain runs to 357 residues: UPF0744 protein C106.03 (357 aa).

Position 282 is a phosphoserine (Ser282).

Belongs to the UPF0744 family.

The protein localises to the cytoplasm. In Schizosaccharomyces pombe (strain 972 / ATCC 24843) (Fission yeast), this protein is UPF0744 protein C106.03.